A 1435-amino-acid polypeptide reads, in one-letter code: MSAHTTAEQSPKRRRIHLDNDSKMHFSSILEDGTSKSQEALLPPRRARGYQLEMLSESLRQNIIVAMDTGSGKTEIAILRIQRELERCPAHKFVWFMAPTVALVEQQHSAISKQLPAFQTRLLTGAANVSHWSTKKIWDDILLNIRIVISTPQVLLDALSNGFVDLHTISLLVFDEAHHCVRDAPANRIMRDFYHYHRQEEGTDGLPHILGLTASPTTRARQTDLEVLEINLNAVCVTPKMHREEMMQFVHMPEYRSIEYQPDVQNFSSIVEKLSVIINELDIENDPFVKFMRRRNDLKSRQRLLDALENKKTPCLDQLKRCLRRSRVIHRELGPWASERFLTRCIMGLKSKQTNASGPQWADWDREDNSYMLNVLSQVVSSTEMGVQNPPDELSRKVHKLIDFLVLEHVNGSIGIVFAEERTIVIMLAQLLSLHPRTKHIKTTAFLGSSASVSRKSDITELHNPIDQSTAIDDLRTGKKDLIIATAVLEEGIDVPICDLVICFDLPKDLRSFIQRRGRARKKGSKFALFLHSEDRATSSELHLMEKTMKQLYLENKRALEHIQYLENVEEEGYDGFRVASTGALLTLSNARNHLSHFCGTLSAEFIATDPEFVLEGDDTTGFSAKVILPSFLDPKLREFRGILLWKTEKMAKRDASFQAYVALYEAGLVNDYLMPAHHHIDDEDGLEQVEKRPSFAKALGSLNPWAAIAKKWREAKHFYQNLIEISAGAQAFPPMVMVLPVELPCDISFRLFWNEHSTLLVSVKRGGQDFAADLIRLAADTTSILLSSLFSQKMVPGSLDFSWLFLPQMESIPSAIREWCDSVTGTISLHDIRDCDMAGFENPGLVRPMDNTARPCTFEKLVWRKYVPAETSDGASLSEQVTYDREVPHIEGRVWPKRTDFLHRLEPSNTSKAHHTAKCFYPANNCSVDRLPVEYSQFALFIPCLIHSIENYFIANELAQTILHPVGFSNLSLVLTAISSSAAREASNYQRLEFLGDSLLKLHTSIQLAADHPLWPEGRLTMRKGNIVSNGYLANAALQTGLDKFILTKPFTGAKWRPSYNTDHINTGDMTEPTREMSTKVLADVVEALIGAANIDGGENKILNCLKIFIPDIKWSPLNECVNILHHQEDSFSDENNNMLSEIEGLVGYTFKKKPLLLAAVTHPSSKGSGHSYQRLEFVGDSILDIIVVQELFESPRCFHHFDMHLMRTALVNADFLAFLCMNAYREEDRGEAVENSKRRVTVAMTKRRAYLWGFMKHSASWDIVNAQQRAAKQYEKLHEEIDEKLRSSKTYPWTLLCRLDAAKFFSDIVESILGAIFIDSQGSMPACRIFLERIGLIPYLKRVLSEDLDLMHPKERLGLLAGTLSVKYETKRTQGVEPQRWECAARVGDEEVVRVDCRVSRVDAETTAAEAAVAILKTRKLQSEASNKVAECD.

Residues 54–234 (MLSESLRQNI…LEVLEINLNA (181 aa)) enclose the Helicase ATP-binding domain. Position 67 to 74 (67 to 74 (MDTGSGKT)) interacts with ATP. A DEAH box motif is present at residues 175 to 178 (DEAH). Positions 400–564 (KLIDFLVLEH…ENKRALEHIQ (165 aa)) constitute a Helicase C-terminal domain. The Dicer dsRNA-binding fold domain occupies 591-684 (ARNHLSHFCG…MPAHHHIDDE (94 aa)). RNase III domains follow at residues 956 to 1099 (ANEL…IDGG) and 1141 to 1323 (LSEI…IDSQ). Positions 1178, 1309, and 1312 each coordinate Mg(2+).

The protein belongs to the helicase family. Dicer subfamily. It depends on Mg(2+) as a cofactor. Mn(2+) serves as cofactor.

In terms of biological role, dicer-like endonuclease involved in cleaving double-stranded RNA in the RNA interference (RNAi) pathway. Produces 21 to 25 bp dsRNAs (siRNAs) which target the selective destruction of homologous RNAs leading to sequence-specific suppression of gene expression, called post-transcriptional gene silencing (PTGS). Part of a broad host defense response against viral infection and transposons. This Coccidioides immitis (strain RS) (Valley fever fungus) protein is Dicer-like protein 2 (DCL2).